A 71-amino-acid polypeptide reads, in one-letter code: DNA gyrase inhibitor YacG (71 aa).

Zn(2+) contacts are provided by cysteine 8, cysteine 11, cysteine 27, and cysteine 31. Residues 48–71 (VVEDDDLPPDAPGGESGGASGRLN) form a disordered region. Over residues 61–71 (GESGGASGRLN) the composition is skewed to gly residues.

Belongs to the DNA gyrase inhibitor YacG family. As to quaternary structure, interacts with GyrB. Zn(2+) is required as a cofactor.

Functionally, inhibits all the catalytic activities of DNA gyrase by preventing its interaction with DNA. Acts by binding directly to the C-terminal domain of GyrB, which probably disrupts DNA binding by the gyrase. The protein is DNA gyrase inhibitor YacG of Ralstonia nicotianae (strain ATCC BAA-1114 / GMI1000) (Ralstonia solanacearum).